Consider the following 257-residue polypeptide: Hydroxyacylglutathione hydrolase (257 aa).

Zn(2+)-binding residues include histidine 54, histidine 56, aspartate 58, histidine 59, histidine 113, aspartate 137, and histidine 175.

It belongs to the metallo-beta-lactamase superfamily. Glyoxalase II family. In terms of assembly, monomer. Requires Zn(2+) as cofactor.

It catalyses the reaction an S-(2-hydroxyacyl)glutathione + H2O = a 2-hydroxy carboxylate + glutathione + H(+). It participates in secondary metabolite metabolism; methylglyoxal degradation; (R)-lactate from methylglyoxal: step 2/2. In terms of biological role, thiolesterase that catalyzes the hydrolysis of S-D-lactoyl-glutathione to form glutathione and D-lactic acid. This chain is Hydroxyacylglutathione hydrolase, found in Crocosphaera subtropica (strain ATCC 51142 / BH68) (Cyanothece sp. (strain ATCC 51142)).